The primary structure comprises 234 residues: Biosynthetic peptidoglycan transglycosylase (234 aa).

A helical transmembrane segment spans residues 8–28 (VIGCFAAGVVALNLYFFAAIA).

The protein belongs to the glycosyltransferase 51 family.

The protein resides in the cell inner membrane. It carries out the reaction [GlcNAc-(1-&gt;4)-Mur2Ac(oyl-L-Ala-gamma-D-Glu-L-Lys-D-Ala-D-Ala)](n)-di-trans,octa-cis-undecaprenyl diphosphate + beta-D-GlcNAc-(1-&gt;4)-Mur2Ac(oyl-L-Ala-gamma-D-Glu-L-Lys-D-Ala-D-Ala)-di-trans,octa-cis-undecaprenyl diphosphate = [GlcNAc-(1-&gt;4)-Mur2Ac(oyl-L-Ala-gamma-D-Glu-L-Lys-D-Ala-D-Ala)](n+1)-di-trans,octa-cis-undecaprenyl diphosphate + di-trans,octa-cis-undecaprenyl diphosphate + H(+). The protein operates within cell wall biogenesis; peptidoglycan biosynthesis. Its function is as follows. Peptidoglycan polymerase that catalyzes glycan chain elongation from lipid-linked precursors. This is Biosynthetic peptidoglycan transglycosylase from Ralstonia nicotianae (strain ATCC BAA-1114 / GMI1000) (Ralstonia solanacearum).